The following is a 430-amino-acid chain: Histidine--tRNA ligase (430 aa).

Belongs to the class-II aminoacyl-tRNA synthetase family. Homodimer.

It is found in the cytoplasm. It carries out the reaction tRNA(His) + L-histidine + ATP = L-histidyl-tRNA(His) + AMP + diphosphate + H(+). This Chlamydia pneumoniae (Chlamydophila pneumoniae) protein is Histidine--tRNA ligase (hisS).